The chain runs to 287 residues: Ribonuclease HII (287 aa).

The RNase H type-2 domain occupies 61–287 (ALQIGVDEAG…FAPVRKALES (227 aa)). D67, E68, and D186 together coordinate a divalent metal cation.

It belongs to the RNase HII family. It depends on Mn(2+) as a cofactor. Requires Mg(2+) as cofactor.

The protein localises to the cytoplasm. It catalyses the reaction Endonucleolytic cleavage to 5'-phosphomonoester.. Its function is as follows. Endonuclease that specifically degrades the RNA of RNA-DNA hybrids. This is Ribonuclease HII from Psychrobacter arcticus (strain DSM 17307 / VKM B-2377 / 273-4).